A 99-amino-acid polypeptide reads, in one-letter code: NADH-ubiquinone oxidoreductase chain 4L (99 aa).

The next 3 helical transmembrane spans lie at 4 to 24 (MFLMFYLSMIMFLFGCMVFVS), 29 to 49 (LLSTLLSLEYMVLSLFIFLFF), and 63 to 83 (FFLTFCVCEGVLGLSILVSMI).

This sequence belongs to the complex I subunit 4L family.

The protein resides in the mitochondrion membrane. It catalyses the reaction a ubiquinone + NADH + 5 H(+)(in) = a ubiquinol + NAD(+) + 4 H(+)(out). Core subunit of the mitochondrial membrane respiratory chain NADH dehydrogenase (Complex I) that is believed to belong to the minimal assembly required for catalysis. Complex I functions in the transfer of electrons from NADH to the respiratory chain. The immediate electron acceptor for the enzyme is believed to be ubiquinone. The protein is NADH-ubiquinone oxidoreductase chain 4L (mt:ND4L) of Anopheles gambiae (African malaria mosquito).